Reading from the N-terminus, the 146-residue chain is Protein beta (146 aa).

In Adelaide River virus (ARV), this protein is Protein beta.